A 717-amino-acid chain; its full sequence is Glutamate--cysteine ligase (717 aa).

The tract at residues 484–576 is disordered; sequence SKTTEQRAAK…TDSDHTDTDD (93 aa). Composition is skewed to low complexity over residues 492 to 518 and 551 to 567; these read AKAQAQAQAQAKAQAQTNGKATLNGNG and GTTNGTNGSSNGSSNGT.

Belongs to the glutamate--cysteine ligase type 3 family.

It catalyses the reaction L-cysteine + L-glutamate + ATP = gamma-L-glutamyl-L-cysteine + ADP + phosphate + H(+). The enzyme catalyses (2S)-2-aminobutanoate + L-glutamate + ATP = gamma-L-glutamyl-(2S)-2-aminobutanoate + ADP + phosphate + H(+). It functions in the pathway sulfur metabolism; glutathione biosynthesis; glutathione from L-cysteine and L-glutamate: step 1/2. Functionally, catalyzes the ATP-dependent ligation of L-glutamate and L-cysteine and participates in the first and rate-limiting step in glutathione biosynthesis. This Drosophila melanogaster (Fruit fly) protein is Glutamate--cysteine ligase.